A 164-amino-acid polypeptide reads, in one-letter code: UPF0304 protein NT01EI_2691 (164 aa).

Belongs to the UPF0304 family.

In Edwardsiella ictaluri (strain 93-146), this protein is UPF0304 protein NT01EI_2691.